Here is a 133-residue protein sequence, read N- to C-terminus: Large ribosomal subunit protein bL20 (133 aa).

Belongs to the bacterial ribosomal protein bL20 family.

Binds directly to 23S ribosomal RNA and is necessary for the in vitro assembly process of the 50S ribosomal subunit. It is not involved in the protein synthesizing functions of that subunit. The sequence is that of Large ribosomal subunit protein bL20 from Rubrobacter xylanophilus (strain DSM 9941 / JCM 11954 / NBRC 16129 / PRD-1).